We begin with the raw amino-acid sequence, 334 residues long: NH(3)-dependent NAD(+) synthetase (334 aa).

Residue 47 to 54 (GLSGGIDS) coordinates ATP. A Mg(2+)-binding site is contributed by Asp53. Residue Arg183 participates in deamido-NAD(+) binding. Thr203 is an ATP binding site. Glu208 contributes to the Mg(2+) binding site. Residues Lys216 and Asp223 each coordinate deamido-NAD(+). Residues Lys232 and Thr254 each contribute to the ATP site.

Belongs to the NAD synthetase family. In terms of assembly, homodimer.

It carries out the reaction deamido-NAD(+) + NH4(+) + ATP = AMP + diphosphate + NAD(+) + H(+). The protein operates within cofactor biosynthesis; NAD(+) biosynthesis; NAD(+) from deamido-NAD(+) (ammonia route): step 1/1. In terms of biological role, catalyzes the ATP-dependent amidation of deamido-NAD to form NAD. Uses ammonia as a nitrogen source. In Rhizobium meliloti (strain 1021) (Ensifer meliloti), this protein is NH(3)-dependent NAD(+) synthetase.